Reading from the N-terminus, the 567-residue chain is DNA ligase (567 aa).

An ATP-binding site is contributed by E260. K262 functions as the N6-AMP-lysine intermediate in the catalytic mechanism. The ATP site is built by R267, R282, E312, F352, R427, and K433.

Belongs to the ATP-dependent DNA ligase family. Requires Mg(2+) as cofactor.

The catalysed reaction is ATP + (deoxyribonucleotide)n-3'-hydroxyl + 5'-phospho-(deoxyribonucleotide)m = (deoxyribonucleotide)n+m + AMP + diphosphate.. DNA ligase that seals nicks in double-stranded DNA during DNA replication, DNA recombination and DNA repair. The protein is DNA ligase of Methanococcoides burtonii (strain DSM 6242 / NBRC 107633 / OCM 468 / ACE-M).